Reading from the N-terminus, the 2298-residue chain is Protein Ycf2 (2298 aa).

1638-1645 (GSIGTGRS) lines the ATP pocket.

Belongs to the Ycf2 family.

The protein resides in the plastid. Its subcellular location is the chloroplast stroma. Its function is as follows. Probable ATPase of unknown function. Its presence in a non-photosynthetic plant (Epifagus virginiana) and experiments in tobacco indicate that it has an essential function which is probably not related to photosynthesis. This Gossypium barbadense (Sea Island cotton) protein is Protein Ycf2.